The primary structure comprises 640 residues: Ribonuclease J (640 aa).

Zn(2+) contacts are provided by histidine 75, histidine 77, aspartate 79, histidine 80, histidine 145, and aspartate 167. 368 to 372 (HVSGH) provides a ligand contact to substrate. Histidine 394 contributes to the Zn(2+) binding site. The interval 578 to 640 (TVSATSATPA…RKRSTTSVSS (63 aa)) is disordered. Positions 598-610 (PEPKVKAKPEKKV) are enriched in basic and acidic residues.

Belongs to the metallo-beta-lactamase superfamily. RNA-metabolizing metallo-beta-lactamase-like family. Bacterial RNase J subfamily. Homodimer, may be a subunit of the RNA degradosome. The cofactor is Zn(2+).

It is found in the cytoplasm. Its function is as follows. An RNase that has 5'-3' exonuclease and possibly endoonuclease activity. Involved in maturation of rRNA and in some organisms also mRNA maturation and/or decay. The polypeptide is Ribonuclease J (Synechocystis sp. (strain ATCC 27184 / PCC 6803 / Kazusa)).